The primary structure comprises 111 residues: Putative pterin-4-alpha-carbinolamine dehydratase (111 aa).

It belongs to the pterin-4-alpha-carbinolamine dehydratase family.

The enzyme catalyses (4aS,6R)-4a-hydroxy-L-erythro-5,6,7,8-tetrahydrobiopterin = (6R)-L-erythro-6,7-dihydrobiopterin + H2O. The chain is Putative pterin-4-alpha-carbinolamine dehydratase from Alkaliphilus metalliredigens (strain QYMF).